A 265-amino-acid chain; its full sequence is Undecaprenyl-diphosphatase (265 aa).

8 helical membrane-spanning segments follow: residues 1–21 (MDWFQALVLALIQGLTEFLPI), 39–59 (QGLAFDVAVHLGTLLAVMMYY), 83–103 (LKLGLLVALATIPAVVFGFLG), 114–134 (ALVIAITTLVFGALLWASDAF), 144–164 (LGVAGAIFIGLAQALALIPGT), 188–208 (SFLLSIPVILGAGLLKTKDLI), 218–238 (MMALGVIVSAVTAYLTIVFFI), and 244–264 (VGMLPFVVYRLILGVALLFWL).

It belongs to the UppP family.

The protein localises to the cell inner membrane. The catalysed reaction is di-trans,octa-cis-undecaprenyl diphosphate + H2O = di-trans,octa-cis-undecaprenyl phosphate + phosphate + H(+). In terms of biological role, catalyzes the dephosphorylation of undecaprenyl diphosphate (UPP). Confers resistance to bacitracin. This Alcanivorax borkumensis (strain ATCC 700651 / DSM 11573 / NCIMB 13689 / SK2) protein is Undecaprenyl-diphosphatase.